The sequence spans 122 residues: Small ribosomal subunit protein uS13 (122 aa).

The interval 93–122 is disordered; it reads RRGLPVRGQRTKTNARTRKGPKKTIAGKKK.

This sequence belongs to the universal ribosomal protein uS13 family. As to quaternary structure, part of the 30S ribosomal subunit. Forms a loose heterodimer with protein S19. Forms two bridges to the 50S subunit in the 70S ribosome.

Located at the top of the head of the 30S subunit, it contacts several helices of the 16S rRNA. In the 70S ribosome it contacts the 23S rRNA (bridge B1a) and protein L5 of the 50S subunit (bridge B1b), connecting the 2 subunits; these bridges are implicated in subunit movement. Contacts the tRNAs in the A and P-sites. The polypeptide is Small ribosomal subunit protein uS13 (Corynebacterium kroppenstedtii (strain DSM 44385 / JCM 11950 / CIP 105744 / CCUG 35717)).